The chain runs to 880 residues: MIYTSNEICQMFLNFFYKKGHTILPGSTLIPNNDPSLLFTNSGMNQFKDIFIQKNYNFKYNRVTTLQNCLRTGGKHNDFENVGYTPQHHTFFQMLGNFSFRDYFKLDAILYAWKFLTSKEQLNLSKEKLWITVYQDDLESYNIWKNIIKIDKHKIIKIGNKYNSSDSDNFWQMGEIGPCGPCTEIFYDYGNTLPGTIPGNNGCNVPRFVEIWNIVFIQFNKLSNGKLIKLTESYVDTGMGLERISAVINNVTSNYEIDLFKPLIKHILELSTVNTPKNKSIYVIADHIRACSFIISENIIPSNEKHGYVLRRIIRRAIRHGHNLGIKSLFLHKLIPTLINTMGKFNPVLKKQQNKIENVLKLEEQKFIETLEKGLKLLHKELKQIQPKHVLSGKLAFNLYDTFGFPIDLTIDICKEHNISINIMEFKRYLNQHKQNSINKNFLNTRNAYYIEDNNINIKTHFVGYQFNKTQSIINNIIIKNNKKTLQINDYQNSILFLNETPFYGESGGQIGDSGIIHNKTGKFIVNCTKMFGNIIGHVGTLASGYLNIHDTVCAEINLPKRKSIQINHTATHLLHASLRKILGKHVFQKGSFISDQSLKFDFSHNAPMNLREIQEVENIINKKIQKNISVSTTLTTLQEIQNKKVMALFQDKYKDKVRMISINDFSVELCGGTHTKYTGDIGLFKITSEISISSGIRRIEAVTGKHAISIIHHQEKTINNIANMLNSKTNNIEQTITKLLNNNIHLKKQIYTLYNQNIYNIVNSLSKHNILIKDVNIIIKNLKNENLLSLRNIVDKLKNRFKCSVIIISSIINNKSIIIVGVTRNVTDRISALDILNKLTKKLGGRGGGKNNIAEGGIKNLISLPIELKKIKTWISSRL.

Residues His569, His573, Cys671, and His675 each coordinate Zn(2+).

Belongs to the class-II aminoacyl-tRNA synthetase family. Homotetramer. Zn(2+) serves as cofactor.

The protein localises to the cytoplasm. It catalyses the reaction tRNA(Ala) + L-alanine + ATP = L-alanyl-tRNA(Ala) + AMP + diphosphate. Functionally, catalyzes the attachment of alanine to tRNA(Ala) in a two-step reaction: alanine is first activated by ATP to form Ala-AMP and then transferred to the acceptor end of tRNA(Ala). Also edits incorrectly charged Ser-tRNA(Ala) and Gly-tRNA(Ala) via its editing domain. This Buchnera aphidicola subsp. Baizongia pistaciae (strain Bp) protein is Alanine--tRNA ligase.